Reading from the N-terminus, the 325-residue chain is Transaldolase (325 aa).

K125 acts as the Schiff-base intermediate with substrate in catalysis.

This sequence belongs to the transaldolase family. Type 2 subfamily.

The protein resides in the cytoplasm. The enzyme catalyses D-sedoheptulose 7-phosphate + D-glyceraldehyde 3-phosphate = D-erythrose 4-phosphate + beta-D-fructose 6-phosphate. It functions in the pathway carbohydrate degradation; pentose phosphate pathway; D-glyceraldehyde 3-phosphate and beta-D-fructose 6-phosphate from D-ribose 5-phosphate and D-xylulose 5-phosphate (non-oxidative stage): step 2/3. Its function is as follows. Transaldolase is important for the balance of metabolites in the pentose-phosphate pathway. The polypeptide is Transaldolase (Campylobacter jejuni subsp. jejuni serotype O:6 (strain 81116 / NCTC 11828)).